A 314-amino-acid chain; its full sequence is MSASNITLTHPTAFLLVGIPGLEHLHIWISIPFCLAYTLALLGNCTLLLIIQADAALHEPMYLFLAMLAAIDLVLSSSALPKMLAIFWFRDREINFFACLAQMFFLHSFSIMESAVLLAMAFDRYVAICKPLHYTKVLTGSLITKIGMAAVARAVTLMTPLPFLLRCFHYCRGPVIAHCYCEHMAVVRLACGDTSFNNIYGIAVAMFIVVLDLLLVILSYIFILQAVLLLASQEARYKAFGTCVSHIGAILAFYTTVVISSVMHRVARHAAPHVHILLANFYLLFPPMVNPIIYGVKTKQIRESILGVFPRKDM.

At 1-27 (MSASNITLTHPTAFLLVGIPGLEHLHI) the chain is on the extracellular side. Asparagine 5 carries N-linked (GlcNAc...) asparagine glycosylation. Residues 28–48 (WISIPFCLAYTLALLGNCTLL) traverse the membrane as a helical segment. The Cytoplasmic portion of the chain corresponds to 49–56 (LIIQADAA). A helical membrane pass occupies residues 57-77 (LHEPMYLFLAMLAAIDLVLSS). At 78-101 (SALPKMLAIFWFRDREINFFACLA) the chain is on the extracellular side. A disulfide bridge links cysteine 99 with cysteine 191. The helical transmembrane segment at 102-122 (QMFFLHSFSIMESAVLLAMAF) threads the bilayer. Over 123 to 141 (DRYVAICKPLHYTKVLTGS) the chain is Cytoplasmic. Residues 142–162 (LITKIGMAAVARAVTLMTPLP) form a helical membrane-spanning segment. The Extracellular segment spans residues 163–198 (FLLRCFHYCRGPVIAHCYCEHMAVVRLACGDTSFNN). A helical membrane pass occupies residues 199 to 219 (IYGIAVAMFIVVLDLLLVILS). Residues 220–239 (YIFILQAVLLLASQEARYKA) lie on the Cytoplasmic side of the membrane. A helical transmembrane segment spans residues 240-260 (FGTCVSHIGAILAFYTTVVIS). Topologically, residues 261–275 (SVMHRVARHAAPHVH) are extracellular. Residues 276-296 (ILLANFYLLFPPMVNPIIYGV) form a helical membrane-spanning segment. Residues 297–314 (KTKQIRESILGVFPRKDM) lie on the Cytoplasmic side of the membrane.

This sequence belongs to the G-protein coupled receptor 1 family.

The protein resides in the cell membrane. Functionally, odorant receptor. The polypeptide is Olfactory receptor 52K2 (OR52K2) (Homo sapiens (Human)).